The chain runs to 1234 residues: MRLDSFPASISVPYEVRSGFQAQGGLPSPSGHTSLRVSVFDSCFCTEVLPHGMYPVYLTGILTDLHEEHSQSSFLGINFRDGDKRSQLADVLREYNVPVIDYPRHFEGCPVLPLSLIQHFLRVCEHWLSTGNNQNIILLHCERGGWPSLAFMLSCLLIFKKLQSAEHKTLDLIYREAPKGFLQLFSALNPMPSQLRYLQYVARRNISPEWPPMERALSFDCLILRAIPSFDSDNGCRPLVRIFGRNIIGKNASTSNMIFSMPKKKTLRHYRQEDCDVIKIDIQCPVQGDVVLECVHLDLDPEKEVMMFRIMFNTAFIRSNVLMLNSDDIDIVWGSKDQYPRNFRAEMLFCELGGISPARPPTATLNGDMKGGLPIEAFSAVQELFNGVDWMESSDNAAFWLLKEFSANSLQEKFQKLILSDMEELSKFQAKVGLQIPLMSPLDSDEEKYSVASDSVSSSEHEKVQPGGNSSDSENINHDLTTEDTASMGNVLVNTPSVLPPTTPPPCGSLSILSTDENQLPPEVQHESPSDRKLPSPSPTAAAPPPPPPPPPPPSGNKPAFSPPPPPPPPPPPPLPQSNYASSQPPPPPPPPPLPNCLVPSPPPPPPPPPILPNRSVPPPPPPPPPLPNHSVLPPPPPPPPPPSLPNRLVPPPPAPGIGNKFPAPPPPPPPPRSSSRTPTGAATSSKGPPPPPPPPLPPANRTNGPGVPSAPPPPPPPPPANRSNGPSAPAPPLPPPLPAAANKRNPPAPPPPPLMTGKKAPAPPPPPPQAPKPPGTVPPPPPLHGASGRPHPPSSKGLNAPAPPPLLGRGREATGSAKGRGIGLAQQSNPPKKASLKPLHWVKVTRAMQGSLWEDAQKQGNQARAPDIDLSELESLFSTAVATNASEKGGTKRGSAISKPEIVHLVDMRRANNCEIMLTKIKMPLPDMINAILALDTSVLDNDQVENLIKFCPTKEEIEMLKNYNGNKEMLGKCEQFFLELMKVPRVESKLRVFAFRITFSTQVEELRTNLTTINDATKEVKESLKLRQIMQTILTLGNALNQGTARGSAVGFRLDSLLKLSDTRARNNKMTLMHYLCKLLSEKLPELLDFDKDLIHLEAASKIQLKLLAEEMQAINKGLEKVEQELAASVNDGAISVGFREALKSFLDAAEAEVRSLISLYSEVGRNADSLAQYFGEDPARCPFEQVTSILVIFVNMFKKSRDENARTAELEKKKLEKDKEKATLSAKKVLE.

Residues 1–208 form the Phosphatase tensin-type domain; that stretch reads MRLDSFPASI…QYVARRNISP (208 aa). The active-site Phosphocysteine intermediate is Cys141. The 139-residue stretch at 214-352 folds into the C2 tensin-type domain; the sequence is ERALSFDCLI…FRAEMLFCEL (139 aa). Disordered regions lie at residues 443-478 and 492-840; these read DSDEEKYSVASDSVSSSEHEKVQPGGNSSDSENINH and LVNT…LKPL. The segment covering 498–507 has biased composition (pro residues); it reads VLPPTTPPPC. Residues 524-534 show a composition bias toward basic and acidic residues; it reads VQHESPSDRKL. Pro residues-rich tracts occupy residues 536-576, 584-656, 663-673, 688-699, 709-721, 729-739, and 762-784; these read SPSP…PPLP, QPPP…PPAP, PAPPPPPPPPR, GPPPPPPPPLPP, PSAPPPPPPPPPA, APAPPLPPPLP, and PAPPPPPPQAPKPPGTVPPPPPL. An FH2 domain is found at 827–1226; sequence QQSNPPKKAS…KLEKDKEKAT (400 aa).

The protein belongs to the formin-like family. Class-II subfamily.

The protein is Formin-like protein 3 (FH3) of Oryza sativa subsp. japonica (Rice).